We begin with the raw amino-acid sequence, 182 residues long: Transmembrane and coiled-coil domain-containing protein 2 (182 aa).

2 consecutive transmembrane segments (helical) span residues 10–30 (IIID…TLLG) and 50–70 (VQVI…YALW). Residues 122-149 (GLQEKILKKLQTVENKVKDLEGMIISQK) are a coiled coil.

The protein resides in the membrane. The sequence is that of Transmembrane and coiled-coil domain-containing protein 2 (TMCO2) from Bos taurus (Bovine).